A 399-amino-acid chain; its full sequence is MASGKVRCTRKLRSWIVEQVESGHFPGVCWDDAAKTMFRIPWKHAGKQDFREDQDAAIFKAWALFKEKHKDGDIGHPAVWKTRLRCALNKSSEFEEVPERGRMDVAEPYKVYRILPAGTLPNQPRNQKSPCKRSISCVSPEREENMENGRTNGVVNHSDSGSNIGGGGNGSNRSDSNSNCNSELEEGAGTTEATIREDPVFLEHQLPLNSDYSLLLTFIYGGRVVGKTQVHSLDCRLVAERSDSESSMEQVEFPKPDPLEPTQHLLNQLDRGVLVASNSRGLFVQRLCPIPISWNAPEAPPGPGPHLLPSNKCVELFKTTYFCRDLAQYFQGQGPPPKFQATLHFWEESPGSSHSQENLITVQMEQAFARHLLEKIPEEEKAALFLLQHTEQSPSALGH.

A DNA-binding region (IRF tryptophan pentad repeat) is located at residues 9–116; sequence TRKLRSWIVE…EPYKVYRILP (108 aa). Positions 118 to 189 are disordered; that stretch reads GTLPNQPRNQ…CNSELEEGAG (72 aa). Residues 120–129 show a composition bias toward polar residues; it reads LPNQPRNQKS. Ser139 is subject to Phosphoserine. Positions 148-157 are enriched in polar residues; the sequence is NGRTNGVVNH. Over residues 171-189 the composition is skewed to low complexity; sequence SNRSDSNSNCNSELEEGAG. Ser393 is subject to Phosphoserine.

It belongs to the IRF family. In terms of assembly, interacts with STAT2 in the cytoplasm. Forms the interferon-stimulated gene factor 3 complex (ISGF3) with the heterodimer STAT1:STAT2; upon stimulation.

Its subcellular location is the nucleus. Functionally, transcription factor that plays an essential role in anti-viral immunity. It mediates signaling by type I IFNs (IFN-alpha and IFN-beta). Following type I IFN binding to cell surface receptors, Jak kinases (TYK2 and JAK1) are activated, leading to tyrosine phosphorylation of STAT1 and STAT2. IRF9/ISGF3G associates with the phosphorylated STAT1:STAT2 dimer to form a complex termed ISGF3 transcription factor, that enters the nucleus. ISGF3 binds to the IFN stimulated response element (ISRE) to activate the transcription of interferon stimulated genes, which drive the cell in an antiviral state. This chain is Interferon regulatory factor 9 (Irf9), found in Mus musculus (Mouse).